Here is a 331-residue protein sequence, read N- to C-terminus: Major outer membrane protein P.IB (331 aa).

An N-terminal signal peptide occupies residues 1–19 (MKKSLIALTLAALPVAAMA).

This sequence belongs to the Gram-negative porin family. As to quaternary structure, homotrimer.

The protein localises to the cell outer membrane. Functionally, serves as a slightly cation selective porin. This chain is Major outer membrane protein P.IB (porB), found in Neisseria meningitidis serogroup B (strain ATCC BAA-335 / MC58).